The primary structure comprises 84 residues: Toxin Aah4 (84 aa).

An N-terminal signal peptide occupies residues Met1–Ser19. The 62-residue stretch at Arg21 to His82 folds into the LCN-type CS-alpha/beta domain. 4 cysteine pairs are disulfide-bonded: Cys31–Cys81, Cys35–Cys53, Cys39–Cys63, and Cys43–Cys65. A propeptide (removed by a carboxypeptidase) is located at residue Arg84.

The protein belongs to the long (4 C-C) scorpion toxin superfamily. Sodium channel inhibitor family. Alpha subfamily. In terms of tissue distribution, expressed by the venom gland.

The protein localises to the secreted. Its function is as follows. Alpha toxins bind voltage-independently at site-3 of sodium channels (Nav) and inhibit the inactivation of the activated channels, thereby blocking neuronal transmission. This toxin seems to specifically act on Nav1.6/SCN8A sodium channel. In vitro, it inhibits the proliferation of the prostate cancer cell line DU145 (IC(50)=15 uM). It shows low effect on the adhesion of DU145 cells to fibronectin (at 15 uM) and is inactive on DU145 cells migration. This chain is Toxin Aah4, found in Androctonus australis (Sahara scorpion).